The following is a 522-amino-acid chain: Tyrosine-protein phosphatase 1 (522 aa).

The disordered stretch occupies residues 32–63; that stretch reads RSNSSISLSSSSHSSFSRMGSLGSLPTNSGSS. The span at 33–63 shows a compositional bias: low complexity; that stretch reads SNSSISLSSSSHSSFSRMGSLGSLPTNSGSS. The region spanning 97 to 471 is the Tyrosine-protein phosphatase domain; it reads IKEEFRLLEE…LFCYKTILDE (375 aa). Catalysis depends on C310, which acts as the Phosphocysteine intermediate. A PTPase insert (Asn-rich) region spans residues 327 to 426; sequence MKKLDHYFKQ…DDAAESDLKY (100 aa). The span at 382–410 shows a compositional bias: low complexity; it reads NNNNNNNLNNNNNINNNSNGSNNTPQTEP. A disordered region spans residues 382–420; the sequence is NNNNNNNLNNNNNINNNSNGSNNTPQTEPNNEEDDDDAA. The span at 411–420 shows a compositional bias: acidic residues; sequence NNEEDDDDAA.

Belongs to the protein-tyrosine phosphatase family. Non-receptor class subfamily. As to expression, expressed predominantly in anterior-like cells and to a lesser degree in prestalk cells.

It is found in the cytoplasm. The protein localises to the cell membrane. The enzyme catalyses O-phospho-L-tyrosyl-[protein] + H2O = L-tyrosyl-[protein] + phosphate. Functionally, may have a role in growth and in the early stages of development. Affects the timing of development. This chain is Tyrosine-protein phosphatase 1 (ptpA1-1), found in Dictyostelium discoideum (Social amoeba).